The chain runs to 479 residues: Serine protease HTRA1A (479 aa).

The first 18 residues, 1–18, serve as a signal peptide directing secretion; it reads MILVTLFCICALVTSLQA. The IGFBP N-terminal domain maps to 27 to 111; the sequence is VIGGCPSHCD…RGKQGVCVCK (85 aa). Intrachain disulfides connect C31–C56, C35–C58, C40–C59, C47–C62, C70–C87, and C81–C108. Residues 96 to 155 enclose the Kazal-like domain; sequence SATVRRRGKQGVCVCKSSDPVCGSDGVSYRDICELKRVSNRAQSLQQPPVLFIQRGACGT. Positions 203–363 are serine protease; that stretch reads GSGFVVSDDG…IPSDKIRQFL (161 aa). Active-site charge relay system residues include H219, D249, and S327. In terms of domain architecture, PDZ spans 364 to 466; the sequence is AESYDRLARG…LRVVVRRGNE (103 aa).

It belongs to the peptidase S1C family. In terms of assembly, forms homotrimers. In the presence of substrate, may form higher-order multimers in a PDZ-independent manner.

The protein resides in the secreted. Its subcellular location is the cytoplasm. It localises to the cytosol. Its function is as follows. Serine protease with a variety of targets, including extracellular matrix proteins and proteoglycans. Through cleavage of proteoglycans, may release soluble FGF-glycosaminoglycan complexes that promote the range and intensity of FGF signals in the extracellular space. Regulates the availability of insulin-like growth factors (IGFs) by cleaving IGF-binding proteins. Inhibits signaling mediated by TGF-beta family members. Consequently, may regulate many physiological processes. Intracellularly, degrades TSC2, leading to the activation of TSC2 downstream targets. The chain is Serine protease HTRA1A (htra1a) from Danio rerio (Zebrafish).